The primary structure comprises 530 residues: 2,3-bisphosphoglycerate-independent phosphoglycerate mutase (530 aa).

The Mn(2+) site is built by Asp15 and Ser65. The active-site Phosphoserine intermediate is Ser65. Substrate contacts are provided by residues His126, 155-156 (RD), Arg187, Arg193, 257-260 (RPDR), and Lys330. Mn(2+)-binding residues include Asp397, His401, Asp438, His439, and His456.

This sequence belongs to the BPG-independent phosphoglycerate mutase family. In terms of assembly, monomer. It depends on Mn(2+) as a cofactor.

It catalyses the reaction (2R)-2-phosphoglycerate = (2R)-3-phosphoglycerate. It participates in carbohydrate degradation; glycolysis; pyruvate from D-glyceraldehyde 3-phosphate: step 3/5. Catalyzes the interconversion of 2-phosphoglycerate and 3-phosphoglycerate. The polypeptide is 2,3-bisphosphoglycerate-independent phosphoglycerate mutase (Synechococcus sp. (strain JA-3-3Ab) (Cyanobacteria bacterium Yellowstone A-Prime)).